A 209-amino-acid polypeptide reads, in one-letter code: Putative amino acid efflux protein YcgF (209 aa).

6 helical membrane passes run 1–21 (MNIF…VGPV), 39–59 (IFGL…YFGL), 62–82 (FLTA…VLTY), 110–130 (FASG…WLGI), 147–167 (LLIY…CMAI), and 184–204 (LTGI…YQGI).

It belongs to the Rht family.

The protein resides in the cell membrane. The chain is Putative amino acid efflux protein YcgF (ycgF) from Bacillus subtilis (strain 168).